Reading from the N-terminus, the 506-residue chain is Histone deacetylase complex subunit CTI6 (506 aa).

The disordered stretch occupies residues Glu-49–Gly-71. Positions Gly-62 to Gly-71 are enriched in acidic residues. Residues Glu-72 to Glu-123 form a PHD-type zinc finger. Residues Ile-138–Ser-425 form a disordered region. Phosphothreonine is present on Thr-174. Ser-175 is modified (phosphoserine). Phosphothreonine is present on Thr-177. The segment covering Asp-179–Ala-195 has biased composition (acidic residues). Phosphoserine is present on residues Ser-216 and Ser-267. Basic and acidic residues-rich tracts occupy residues Asp-231–Asp-271 and Asp-312–Ser-342. Basic residues predominate over residues Ala-373–Arg-393. Positions Ser-394 to Arg-404 are enriched in polar residues. Over residues Arg-405 to Val-415 the composition is skewed to basic and acidic residues.

As to quaternary structure, component of the RPD3C(L) complex composed of at least ASH1, CTI6, DEP1, PHO23, RPD3, RXT2, RXT3, SAP30, SDS3, SIN3, UME1 and UME6. Interacts with CYC8.

The protein localises to the nucleus. Functionally, component of the RPD3C(L) histone deacetylase complex (HDAC). Responsible for the deacetylation of lysine residues on the N-terminal part of the core histones (H2A, H2B, H3 and H4). Histone deacetylation gives a tag for epigenetic repression and plays an important role in transcriptional regulation, cell cycle progression and developmental events. CTI6 links the SAGA coactivator to the CYC8-TUP1 corepressor. Involved in transcription regulation of heme-regulated genes and required for GCN5 recruitment, histone H3 acetylation and SPT15/TBP binding to promoters. In Saccharomyces cerevisiae (strain ATCC 204508 / S288c) (Baker's yeast), this protein is Histone deacetylase complex subunit CTI6 (CTI6).